The following is a 481-amino-acid chain: MCWRELLYMLPELYLLGSAMIALLLGIVVDARWVHRLSAVSMGVVVVLSWWSGVTDHVAEDVHLFNGLVLHTRYTCISRMLVGVAGFVASLLFLCARREVRYEFSVVMLFATLGAMTLVQAGHFLSLYISLELNSLSSCVLVCFNRSSERASESALKFFILSALSSCIMLYGISLVYGYSTGLECNVMQEILAGRASLGATLGCAFVLVGVLFKLAVVPFHMWAVDTYHGSPMAAMAFFLIVTKSAAILLLARIVGENGILQQSILYGIISVSGLSALVGELGALRQSNIKRLLAYSNIGQLGYVLPVVVLHGTSSYAIFHYVLTSWVINAWIFSVLLRYDDEGFELASLAGMHRSSPFVAFALVVSMVSAAGFPPFLGCWPKYFFLKSIVMSDIPTVVAFPYVLLVCAVGIVPCFYCFRIARVVYFDQPAMGAGHPALPHHLGLTVIAVVCMLLSVIALFLAQYFDILFQGLVWVFGGRT.

The next 13 membrane-spanning stretches (helical) occupy residues Met9 to Val29, Ala39 to Ala59, Cys76 to Ala96, Phe104 to Phe124, Phe158 to Gly178, Ala205 to Val225, Pro232 to Ala252, Ile265 to Leu285, Leu293 to Gly313, Ala318 to Leu338, Phe359 to Gly379, Val399 to Phe419, and Leu443 to Ala463.

Belongs to the complex I subunit 2 family. As to quaternary structure, NDH-1 is composed of 14 different subunits. Subunits NuoA, H, J, K, L, M, N constitute the membrane sector of the complex.

It localises to the cell inner membrane. It carries out the reaction a quinone + NADH + 5 H(+)(in) = a quinol + NAD(+) + 4 H(+)(out). Functionally, NDH-1 shuttles electrons from NADH, via FMN and iron-sulfur (Fe-S) centers, to quinones in the respiratory chain. The immediate electron acceptor for the enzyme in this species is believed to be ubiquinone. Couples the redox reaction to proton translocation (for every two electrons transferred, four hydrogen ions are translocated across the cytoplasmic membrane), and thus conserves the redox energy in a proton gradient. The polypeptide is NADH-quinone oxidoreductase subunit N (Anaplasma marginale (strain Florida)).